Consider the following 447-residue polypeptide: Na(+)-translocating NADH-quinone reductase subunit A (447 aa).

The protein belongs to the NqrA family. As to quaternary structure, composed of six subunits; NqrA, NqrB, NqrC, NqrD, NqrE and NqrF.

It catalyses the reaction a ubiquinone + n Na(+)(in) + NADH + H(+) = a ubiquinol + n Na(+)(out) + NAD(+). Functionally, NQR complex catalyzes the reduction of ubiquinone-1 to ubiquinol by two successive reactions, coupled with the transport of Na(+) ions from the cytoplasm to the periplasm. NqrA to NqrE are probably involved in the second step, the conversion of ubisemiquinone to ubiquinol. The sequence is that of Na(+)-translocating NADH-quinone reductase subunit A from Yersinia pestis.